The following is a 289-amino-acid chain: 4-diphosphocytidyl-2-C-methyl-D-erythritol kinase (289 aa).

Lys11 is a catalytic residue. An ATP-binding site is contributed by 93 to 103 (PLAAGLAGGSA). The active site involves Asp135.

This sequence belongs to the GHMP kinase family. IspE subfamily.

It carries out the reaction 4-CDP-2-C-methyl-D-erythritol + ATP = 4-CDP-2-C-methyl-D-erythritol 2-phosphate + ADP + H(+). The protein operates within isoprenoid biosynthesis; isopentenyl diphosphate biosynthesis via DXP pathway; isopentenyl diphosphate from 1-deoxy-D-xylulose 5-phosphate: step 3/6. Catalyzes the phosphorylation of the position 2 hydroxy group of 4-diphosphocytidyl-2C-methyl-D-erythritol. The chain is 4-diphosphocytidyl-2-C-methyl-D-erythritol kinase from Thermoanaerobacter sp. (strain X514).